The following is a 187-amino-acid chain: Large ribosomal subunit protein uL6 (187 aa).

Belongs to the universal ribosomal protein uL6 family. Part of the 50S ribosomal subunit.

This protein binds to the 23S rRNA, and is important in its secondary structure. It is located near the subunit interface in the base of the L7/L12 stalk, and near the tRNA binding site of the peptidyltransferase center. The protein is Large ribosomal subunit protein uL6 of Roseiflexus castenholzii (strain DSM 13941 / HLO8).